Here is a 91-residue protein sequence, read N- to C-terminus: DNA-directed RNA polymerase subunit omega (91 aa).

This sequence belongs to the RNA polymerase subunit omega family. The RNAP catalytic core consists of 2 alpha, 1 beta, 1 beta' and 1 omega subunit. When a sigma factor is associated with the core the holoenzyme is formed, which can initiate transcription.

The catalysed reaction is RNA(n) + a ribonucleoside 5'-triphosphate = RNA(n+1) + diphosphate. Promotes RNA polymerase assembly. Latches the N- and C-terminal regions of the beta' subunit thereby facilitating its interaction with the beta and alpha subunits. The protein is DNA-directed RNA polymerase subunit omega of Shigella flexneri.